Reading from the N-terminus, the 87-residue chain is Putative sodium channel toxin Ts40 (87 aa).

Positions 1–19 (MTALFYLLFLTSVIIETHQ) are cleaved as a signal peptide. Cystine bridges form between Cys-41-Cys-63, Cys-47-Cys-68, and Cys-51-Cys-70.

Belongs to the long (4 C-C) scorpion toxin superfamily. Sodium channel inhibitor family. Expressed by the venom gland.

It localises to the secreted. In terms of biological role, putative sodium channel toxin. This is Putative sodium channel toxin Ts40 from Tityus serrulatus (Brazilian scorpion).